We begin with the raw amino-acid sequence, 134 residues long: FK506-binding protein 2 (134 aa).

An N-terminal signal peptide occupies residues 1–19 (MRFSIFSTLLVSLATLSTA). Residues 39 to 127 (GDTVQMHYKG…IFETELVGID (89 aa)) enclose the PPIase FKBP-type domain. A Prevents secretion from ER motif is present at residues 131–134 (KDEL).

This sequence belongs to the FKBP-type PPIase family. FKBP2 subfamily.

The protein resides in the endoplasmic reticulum. It carries out the reaction [protein]-peptidylproline (omega=180) = [protein]-peptidylproline (omega=0). With respect to regulation, inhibited by both FK506 and rapamycin. Functionally, PPIases accelerate the folding of proteins. It catalyzes the cis-trans isomerization of proline imidic peptide bonds in oligopeptides. The chain is FK506-binding protein 2 (fpr2) from Aspergillus oryzae (strain ATCC 42149 / RIB 40) (Yellow koji mold).